Reading from the N-terminus, the 865-residue chain is Nicotinate catabolism cluster-specific transcription factor (865 aa).

C2H2-type zinc fingers lie at residues 8–32 (HACTYPGCSKAFTRAEHLRRHSLNH) and 41–63 (YTCQRCMTHFSRADLLSRHLDRH). The segment at 74 to 168 (GKGVLETRKR…SIDDDGTDPD (95 aa)) is disordered. The Nuclear localization signal(NLS) motif lies at 77-87 (VLETRKRMRRA). Basic and acidic residues predominate over residues 78-89 (LETRKRMRRAED). Positions 96 to 105 (PPKRPSRHQQ) are enriched in basic residues. Positions 108–132 (GPPVGAPLSSSGSVSAGSGRSSRSP) are enriched in low complexity. A Nuclear export signal (NES) motif is present at residues 285-289 (LDIDL).

Its subcellular location is the nucleus. In terms of biological role, transcription factor that specifically regulates the expression of the hxn gene cluster that mediates the degradation of nicotinate and related metabolites. This Emericella nidulans (strain FGSC A4 / ATCC 38163 / CBS 112.46 / NRRL 194 / M139) (Aspergillus nidulans) protein is Nicotinate catabolism cluster-specific transcription factor.